We begin with the raw amino-acid sequence, 235 residues long: Large ribosomal subunit protein uL1 (235 aa).

It belongs to the universal ribosomal protein uL1 family. Part of the 50S ribosomal subunit.

Binds directly to 23S rRNA. The L1 stalk is quite mobile in the ribosome, and is involved in E site tRNA release. Functionally, protein L1 is also a translational repressor protein, it controls the translation of the L11 operon by binding to its mRNA. This Prochlorococcus marinus (strain MIT 9313) protein is Large ribosomal subunit protein uL1.